We begin with the raw amino-acid sequence, 192 residues long: Ras-like protein 2 (192 aa).

12-19 provides a ligand contact to GTP; the sequence is GGGGVGKS. Positions 34 to 42 match the Effector region motif; sequence YDPTIEDSY. Residue Cys-46 is the site of S-palmitoyl cysteine attachment. GTP-binding positions include 59-63 and 118-121; these read DTAGQ and NKCD. 2 S-palmitoyl cysteine lipidation sites follow: Cys-120 and Cys-147. Cys-189 carries the post-translational modification Cysteine methyl ester. Cys-189 carries S-farnesyl cysteine lipidation. Residues 190 to 192 constitute a propeptide, removed in mature form; that stretch reads CLM.

This sequence belongs to the small GTPase superfamily. Ras family. In terms of assembly, interacts with hzg.

Its subcellular location is the cell membrane. It carries out the reaction GTP + H2O = GDP + phosphate + H(+). Alternates between an inactive form bound to GDP and an active form bound to GTP. Activated by a guanine nucleotide-exchange factor (GEF) and inactivated by a GTPase-activating protein (GAP). Functionally, may be involved in endocytic processes and/or other transport pathways mediated by vesicle trafficking. May interact functionally with ROP protein. Ras proteins bind GDP/GTP and possess intrinsic GTPase activity. This chain is Ras-like protein 2 (Ras64B), found in Drosophila melanogaster (Fruit fly).